The following is a 653-amino-acid chain: MGCCSSASAAQSSKREWKPLEDRSCTDIPWLLLFVLFCIGMGFICGFSVATGAAARLVSGYDSYGNICGQRNAKLEAIPNSGLDHTHRKYVFFLDPCNLDLINRKIKSIALCVAACPRQELKTLSDVQKFAEINGSALCSYNIKPSEYTLTSKSSGFCPKLPVPASAPIPFFHRCAPVNISCYAKFAEALITFVSDNSVLHRLISGVMTSKEIILGLCLLSLVLSMILMVIIRYISRVLVWILTVLVILGSLGGTGVLWWLYAKQRRSPKEAVIPEQLQIAEDNLRALLIYAISATVFTVILFLIMLVMRKRVALTIALFHVAGKVFIHLPLLVFQPFWTFFALVLFWAYWIMTLLFLGTTGSAVQNEQGFVEYKISGPLQYMWWYHVVGLIWISEFILACQQMTVAGAVVTYYFTRDKRNLPFTPILASVNRLIRYHLGTVAKGSFIITLVKIPRMVLMYIHSQLKGKENACARCMLKSCICCLWCLEKCLSYLNQNAYTATAINSTNFCTSAKDAFVILVENALRVAAINTVGDFMLFLGKVLIVCSTGLAGIMLLNYQQDYTVWVLPLIIVCLFAFLVAHCFLSIYEMVVDVLFLCFAIDTKYNDGSPGREFYMDKVLMEFVENSRKAMKEAGKGGAADARELKPMLRKR.

Residue Gly-2 is the site of N-myristoyl glycine attachment. Topologically, residues 2–29 (GCCSSASAAQSSKREWKPLEDRSCTDIP) are cytoplasmic. The helical transmembrane segment at 30 to 50 (WLLLFVLFCIGMGFICGFSVA) threads the bilayer. The Mitochondrial intermembrane segment spans residues 51-211 (TGAAARLVSG…RLISGVMTSK (161 aa)). Residues 212–232 (EIILGLCLLSLVLSMILMVII) form a helical membrane-spanning segment. Residues 233-237 (RYISR) are Cytoplasmic-facing. Residues 238 to 258 (VLVWILTVLVILGSLGGTGVL) form a helical membrane-spanning segment. Over 259–287 (WWLYAKQRRSPKEAVIPEQLQIAEDNLRA) the chain is Mitochondrial intermembrane. Residues 288–308 (LLIYAISATVFTVILFLIMLV) form a helical membrane-spanning segment. Topologically, residues 309-314 (MRKRVA) are cytoplasmic. The chain crosses the membrane as a helical span at residues 315–335 (LTIALFHVAGKVFIHLPLLVF). Residues 336-337 (QP) lie on the Mitochondrial intermembrane side of the membrane. Residues 338 to 358 (FWTFFALVLFWAYWIMTLLFL) traverse the membrane as a helical segment. The Cytoplasmic segment spans residues 359–379 (GTTGSAVQNEQGFVEYKISGP). The chain crosses the membrane as a helical span at residues 380–400 (LQYMWWYHVVGLIWISEFILA). Over 401 to 536 (CQQMTVAGAV…RVAAINTVGD (136 aa)) the chain is Mitochondrial intermembrane. The chain crosses the membrane as a helical span at residues 537-557 (FMLFLGKVLIVCSTGLAGIML). Over 558-565 (LNYQQDYT) the chain is Cytoplasmic. Residues 566-586 (VWVLPLIIVCLFAFLVAHCFL) form a helical membrane-spanning segment. The Mitochondrial intermembrane portion of the chain corresponds to 587 to 653 (SIYEMVVDVL…RELKPMLRKR (67 aa)).

Belongs to the CTL (choline transporter-like) family. Specifically abundant in skeletal muscle (at protein level).

Its subcellular location is the cell membrane. The protein localises to the mitochondrion outer membrane. The enzyme catalyses choline(out) + n H(+)(in) = choline(in) + n H(+)(out). The catalysed reaction is ethanolamine(out) + n H(+)(in) = ethanolamine(in) + n H(+)(out). Choline/H+ antiporter. Also acts as a high-affinity ethanolamine/H+ antiporter, regulating the supply of extracellular ethanolamine (Etn) for the CDP-Etn pathway, redistribute intracellular Etn and balance the CDP-Cho and CDP-Etn arms of the Kennedy pathway. Involved in membrane synthesis and myelin production. In Mus musculus (Mouse), this protein is Choline transporter-like protein 1 (Slc44a1).